A 189-amino-acid chain; its full sequence is Ribonuclease HII (189 aa).

One can recognise an RNase H type-2 domain in the interval Met1–Lys189. Asp6, Glu7, and Asp98 together coordinate a divalent metal cation.

Belongs to the RNase HII family. Requires Mn(2+) as cofactor. It depends on Mg(2+) as a cofactor.

The protein resides in the cytoplasm. It catalyses the reaction Endonucleolytic cleavage to 5'-phosphomonoester.. Functionally, endonuclease that specifically degrades the RNA of RNA-DNA hybrids. This Dichelobacter nodosus (strain VCS1703A) protein is Ribonuclease HII.